The sequence spans 684 residues: MTQATGDARMPDEESDLLQIKPLGAGQEVGRSCIMLEFKGKKIMLDCGIHPGLSGMDALPYVDLIEADEIDLLFISHFHLDHCGALPWFLMKTSFKGRCFMTHATKAIYRWMLSDYIKISNISTEQMLYTEADLEASMEKIETINFHEERDVMGVRFCAYIAGHVLGAAMFMIEIAGIKILYTGDFSRQEDRHLMAAEVPPMKPDVLITESTYGTHIHEKREDRENRFTSLVQKIVQQGGRCLIPVFALGRAQELLLILDEFWSQNPDLHEIPIYYASSLAKKCMAVYQTYINAMNDRIRRQIAVNNPFVFRHISNLKGIDHFEDIGPCVIMASPGMMQSGLSRELFESWCTDPKNGVIIAGYCVEGTLAKAVLSEPEEITTLSGQKLPLNMSVDYISFSAHTDYQQTSEFIRLLKPTHVVLVHGEQNEMSRLKLALQREYEADASTDIKFYNPRNTHAVDLYFRGEKTAKVMGSLAAKNSEVGSKLSGVLVKRDFKYHLLAPSDLGKYTDMSMSVVTQRQSIPWGSSLSTLELLLDRIGAGCVEVLEAERKLRVFGCIELTVEQKIIVMEWQATHVNDVYADAVLACIMQSELGGTNLKGATKQTKSEDSRFRECLIETLQDTFGDNCVPKMFEGDLLPVTVSGKRAEINLETLAISCAEDDVLRQMLNTTVQKLHQTLVSAL.

His77, His79, Asp81, His82, His164, and Asp185 together coordinate Zn(2+). His402 serves as the catalytic Proton donor. His424 contributes to the Zn(2+) binding site.

The protein belongs to the metallo-beta-lactamase superfamily. RNA-metabolizing metallo-beta-lactamase-like family. CPSF3 subfamily. In terms of assembly, component of the cleavage and polyadenylation specificity factor (CPSF) complex, composed of at least Clp, Cpsf73, Cpsf100 and Cpsf160. Interacts with Sym and Cpsf100 forming a core cleavage factor required for both polyadenylated and histone mRNA processing. Interacts with Slbp and Lsm11. Requires Zn(2+) as cofactor.

The protein resides in the nucleus. In terms of biological role, component of the cleavage and polyadenylation specificity factor (CPSF) complex that plays a key role in pre-mRNA 3'-end formation, recognizing the AAUAAA signal sequence and interacting with poly(A) polymerase and other factors to bring about cleavage and poly(A) addition. Has endonuclease activity and functions as an mRNA 3'-end-processing endonuclease. Required for the cotranscriptional processing of 3'-ends of polyadenylated and histone pre-mRNA. In Drosophila melanogaster (Fruit fly), this protein is Cleavage and polyadenylation specificity factor 73 (Cpsf73).